The chain runs to 397 residues: Probable peptidoglycan glycosyltransferase FtsW (397 aa).

Residues 1–30 are Cytoplasmic-facing; that stretch reads MYGLEMLEKIKLEYDKWACLTPKNSLYDRT. Residues 31–51 form a helical membrane-spanning segment; sequence LVWLFLSLLMIGFIMVTSASI. Residues 52–61 lie on the Periplasmic side of the membrane; sequence PVSTRLNNDP. Residues 62-82 traverse the membrane as a helical segment; it reads FHFAIRDSIYLACSLLAFAFV. Residues 83–94 lie on the Cytoplasmic side of the membrane; that stretch reads VKIPMRNWEKYN. The helical transmembrane segment at 95–115 threads the bilayer; the sequence is VPLFLLSLLFLASVLIFGRSV. Residues 116–126 are Periplasmic-facing; sequence NGSIRWIQLGP. The helical transmembrane segment at 127-146 threads the bilayer; sequence INFQPAELSKLAIICYFSSF. Over 147 to 158 the chain is Cytoplasmic; it reads YVRKYDEMRNRS. A run of 2 helical transmembrane segments spans residues 159-179 and 180-200; these read ASVI…LLQP and DLGS…IMGA. Lys-201 is a topological domain (cytoplasmic). The helical transmembrane segment at 202–222 threads the bilayer; sequence VMQFLLLIVTASVSFILLVLT. The Periplasmic portion of the chain corresponds to 223 to 280; that stretch reads SEYRLKRVTSFLDPFADAYGDGFQLSNAQMAFGQGQLWGQGLGNSVQKLEYLPEAHTD. The chain crosses the membrane as a helical span at residues 281 to 301; that stretch reads FVMAVVAEEFGFIGIIFMVVL. Over 302–325 the chain is Cytoplasmic; it reads LLCLSFRAIKISRDALKLEARFRG. A helical transmembrane segment spans residues 326–346; it reads FFAFGVAIWVFLQGSVNLGVA. Over 347 to 356 the chain is Periplasmic; the sequence is SGALPTKGLT. Residues 357–377 traverse the membrane as a helical segment; it reads FPLVSYGGSSLVIMSVAIAIL. Residues 378–397 lie on the Cytoplasmic side of the membrane; it reads LRIDYENRLTRVGHAQIKEP.

This sequence belongs to the SEDS family. FtsW subfamily.

The protein localises to the cell inner membrane. The catalysed reaction is [GlcNAc-(1-&gt;4)-Mur2Ac(oyl-L-Ala-gamma-D-Glu-L-Lys-D-Ala-D-Ala)](n)-di-trans,octa-cis-undecaprenyl diphosphate + beta-D-GlcNAc-(1-&gt;4)-Mur2Ac(oyl-L-Ala-gamma-D-Glu-L-Lys-D-Ala-D-Ala)-di-trans,octa-cis-undecaprenyl diphosphate = [GlcNAc-(1-&gt;4)-Mur2Ac(oyl-L-Ala-gamma-D-Glu-L-Lys-D-Ala-D-Ala)](n+1)-di-trans,octa-cis-undecaprenyl diphosphate + di-trans,octa-cis-undecaprenyl diphosphate + H(+). It functions in the pathway cell wall biogenesis; peptidoglycan biosynthesis. Peptidoglycan polymerase that is essential for cell division. The chain is Probable peptidoglycan glycosyltransferase FtsW from Haemophilus ducreyi (strain 35000HP / ATCC 700724).